The primary structure comprises 587 residues: Phosphatidylinositol-3-phosphatase SAC1 (587 aa).

Topologically, residues 1–520 are cytoplasmic; that stretch reads MATAAYEQLK…SPLSVPRDWK (520 aa). The 330-residue stretch at 122–451 folds into the SAC domain; it reads LNHVLNVDGF…ANACAKQYAG (330 aa). The essential for phosphatidylinositol-4-phosphate phosphatase activity stretch occupies residues 452–587; that stretch reads TGALKTDFTR…PRLVQKEKID (136 aa). At lysine 456 the chain carries N6-acetyllysine. A helical transmembrane segment spans residues 521–541; sequence FLALPIIMVVAFSMCIICLLM. Residues 542-548 lie on the Lumenal side of the membrane; the sequence is AGDTWTE. The chain crosses the membrane as a helical span at residues 549-569; the sequence is TLAYVLFWGVASIGTFFIILY. The Cytoplasmic portion of the chain corresponds to 570–587; sequence NGKDFVDAPRLVQKEKID.

Interacts with TMEM39A. Interacts with SEC23A and SEC24A; this interaction is reduced in the absence of TMEM39A. Interacts with PLEKHA3 and VAPA and/or VAPB to form a ternary complex.

It localises to the endoplasmic reticulum membrane. It is found in the golgi apparatus membrane. The catalysed reaction is a 1,2-diacyl-sn-glycero-3-phospho-(1D-myo-inositol-3-phosphate) + H2O = a 1,2-diacyl-sn-glycero-3-phospho-(1D-myo-inositol) + phosphate. It catalyses the reaction a 1,2-diacyl-sn-glycero-3-phospho-(1D-myo-inositol 4-phosphate) + H2O = a 1,2-diacyl-sn-glycero-3-phospho-(1D-myo-inositol) + phosphate. Phosphoinositide phosphatase which catalyzes the hydrolysis of phosphatidylinositol 4-phosphate (PtdIns(4)P), phosphatidylinositol 3-phosphate (PtdIns(3)P) and has low activity towards phosphatidylinositol-3,5-bisphosphate (PtdIns(3,5)P2). Shows a very robust PtdIns(4)P phosphatase activity when it binds PtdIns(4)P in a 'cis' configuration in the cellular environment, with much less activity seen when it binds PtdIns(4)P in 'trans' configuration. PtdIns(4)P phosphatase activity (when it binds PtdIns(4)P in 'trans' configuration) is enhanced in the presence of PLEKHA3. This is Phosphatidylinositol-3-phosphatase SAC1 (SACM1L) from Pongo abelii (Sumatran orangutan).